Here is a 206-residue protein sequence, read N- to C-terminus: MIKNIVFDFGGVIVDIDRDKAVQAFIKLGLADADTRLDKYHQTGIFQELEEGKLSADEFRKQLGDLCGRELTMEETKQAWLGFFNEVDLRKLDYILGLRKSYHVYLLSNTNPFVMSWACSPEFSSEGKPLNDYCDKLYLSYQLGHTKPAPEIFDFMIKDSHVIPSETLFVDDGSSNIHIGKELGFETFQPENGADWRQELTVILNS.

The active-site Nucleophile is the Asp8. Mg(2+) contacts are provided by Asp8 and Asp172.

The protein belongs to the HAD-like hydrolase superfamily. It depends on Mg(2+) as a cofactor.

The catalysed reaction is D-ribitol 1-phosphate + H2O = ribitol + phosphate. The enzyme catalyses D-ribitol 5-phosphate + H2O = ribitol + phosphate. It carries out the reaction 5-amino-6-(5-phospho-D-ribitylamino)uracil + H2O = 5-amino-6-(D-ribitylamino)uracil + phosphate. It functions in the pathway cofactor biosynthesis; riboflavin biosynthesis; 5-amino-6-(D-ribitylamino)uracil from GTP: step 4/4. Catalyzes the dephosphorylation of D-ribitol-5-phosphate and D-ribitol-1-phosphate. Is also able to dephosphorylate 5-amino-6-(5-phospho-D-ribitylamino)uracil, and thus could be involved in the riboflavin biosynthesis pathway. The polypeptide is D-ribitol-5-phosphate phosphatase (Bacteroides thetaiotaomicron (strain ATCC 29148 / DSM 2079 / JCM 5827 / CCUG 10774 / NCTC 10582 / VPI-5482 / E50)).